Reading from the N-terminus, the 310-residue chain is Aspartate carbamoyltransferase catalytic subunit (310 aa).

R55 and T56 together coordinate carbamoyl phosphate. An L-aspartate-binding site is contributed by K83. The carbamoyl phosphate site is built by R105, H136, and Q139. R169 and R223 together coordinate L-aspartate. G264 and P265 together coordinate carbamoyl phosphate.

This sequence belongs to the aspartate/ornithine carbamoyltransferase superfamily. ATCase family. Heterododecamer (2C3:3R2) of six catalytic PyrB chains organized as two trimers (C3), and six regulatory PyrI chains organized as three dimers (R2).

The enzyme catalyses carbamoyl phosphate + L-aspartate = N-carbamoyl-L-aspartate + phosphate + H(+). Its pathway is pyrimidine metabolism; UMP biosynthesis via de novo pathway; (S)-dihydroorotate from bicarbonate: step 2/3. Catalyzes the condensation of carbamoyl phosphate and aspartate to form carbamoyl aspartate and inorganic phosphate, the committed step in the de novo pyrimidine nucleotide biosynthesis pathway. The chain is Aspartate carbamoyltransferase catalytic subunit from Saccharopolyspora erythraea (strain ATCC 11635 / DSM 40517 / JCM 4748 / NBRC 13426 / NCIMB 8594 / NRRL 2338).